The following is a 929-amino-acid chain: Chaperone protein ClpC1, chloroplastic (929 aa).

Residues 1–38 (MAMATRVLAQSTPPSLACYQRNVPSRGSGRSRRSVKMM) constitute a chloroplast transit peptide. A Clp R domain is found at 95-237 (FERFTEKAIK…RTQVIRMVGE (143 aa)). 2 repeat regions span residues 98–163 (FTEK…IGRG) and 173–237 (FTPR…MVGE). Residues 257 to 504 (LEEYGTNLTK…RVRLRHAQVP (248 aa)) form an i region. Residue 302–309 (GEPGVGKT) participates in ATP binding. A UVR domain is found at 511–546 (EKELRQITKEKNEAVRGQDFEKAGTLRDREIELRAE). Residues 552–571 (AKGKEMSKAESETGEEGPMV) are disordered. Residues 553-562 (KGKEMSKAES) are compositionally biased toward basic and acidic residues. The II stretch occupies residues 571–762 (VTESDIQHIV…LLIMTSNVGS (192 aa)). 645 to 652 (GPTGVGKS) contacts ATP. Residues 908–919 (LNGGSGTPTTSL) are compositionally biased toward polar residues. Residues 908–929 (LNGGSGTPTTSLEEQEDSLPVA) are disordered. Residues 920–929 (EEQEDSLPVA) show a composition bias toward acidic residues.

The protein belongs to the ClpA/ClpB family. ClpC subfamily. In terms of assembly, homodimer. May form hexamer and interact with Clp core. Interacts (via N-terminus) with CLPS1. Interacts with CLPF. As to expression, highly expressed in rosette leaves. Expressed in roots, stems and inflorescences. Expressed in photosynthetic green tissues with high levels in young, developing leaf tissues.

It is found in the plastid. The protein localises to the chloroplast stroma. Its subcellular location is the chloroplast membrane. Its function is as follows. Molecular chaperone that hydrolyzes ATP and is associated with the chloroplast protein import apparatus. May function as the motor for chloroplast protein translocation, as translocation requires ATP hydrolysis in the stroma. May interact with a ClpP-like protease involved in degradation of denatured proteins in the chloroplast. Involved in the regulation of chlorophyll b biosynthesis through the destabilization of chlorophyllide a oxygenase (CAO) protein in response to the accumulation of chlorophyll b. Involved in leaf iron homeostasis. This chain is Chaperone protein ClpC1, chloroplastic, found in Arabidopsis thaliana (Mouse-ear cress).